A 38-amino-acid chain; its full sequence is Large ribosomal subunit protein bL36 (38 aa).

Belongs to the bacterial ribosomal protein bL36 family.

This Chlorobium phaeobacteroides (strain BS1) protein is Large ribosomal subunit protein bL36.